The following is a 581-amino-acid chain: Trehalase (581 aa).

The protein belongs to the glycosyl hydrolase 15 family. Monomer.

It catalyses the reaction alpha,alpha-trehalose + H2O = alpha-D-glucose + beta-D-glucose. The protein operates within glycan degradation; trehalose degradation; D-glucose from alpha,alpha-trehalose: step 1/1. With respect to regulation, inhibited by validamycin A. In terms of biological role, catalyzes the hydrolysis of alpha,alpha-trehalose into two molecules of D-glucose. In Thermoplasma acidophilum (strain ATCC 25905 / DSM 1728 / JCM 9062 / NBRC 15155 / AMRC-C165), this protein is Trehalase.